Consider the following 132-residue polypeptide: Small ribosomal subunit protein uS8 (132 aa).

It belongs to the universal ribosomal protein uS8 family. As to quaternary structure, part of the 30S ribosomal subunit. Contacts proteins S5 and S12.

Its function is as follows. One of the primary rRNA binding proteins, it binds directly to 16S rRNA central domain where it helps coordinate assembly of the platform of the 30S subunit. The protein is Small ribosomal subunit protein uS8 of Pediococcus pentosaceus (strain ATCC 25745 / CCUG 21536 / LMG 10740 / 183-1w).